A 547-amino-acid polypeptide reads, in one-letter code: Phosphoethanolamine transferase EptA (547 aa).

Over 1-9 (MLKRLLKRP) the chain is Cytoplasmic. Residues 10-30 (SLNLLAWLLLAAFYISICLNI) traverse the membrane as a helical segment. At 31–47 (AFFKQVLQALPLDSLHN) the chain is on the periplasmic side. A helical transmembrane segment spans residues 48-68 (VLVFLSMPVVAFSVINIVLTL). Residues 69–79 (SSFLWLNRPLA) lie on the Cytoplasmic side of the membrane. A helical membrane pass occupies residues 80-100 (CLFILVGAAAQYFIMTYGIVI). Residues 101 to 123 (DRSMIANIIDTTPAESYALMTPQ) are Periplasmic-facing. Residues 124-144 (MLLTLGFSGVLAALIACWIKI) traverse the membrane as a helical segment. At 145–154 (KPATSRLRSV) the chain is on the cytoplasmic side. Residues 155–175 (LFRGANILVSVLLILLVAALF) form a helical membrane-spanning segment. The Periplasmic segment spans residues 176–547 (YKDYASLFRN…ILQTCRRVSE (372 aa)).

It belongs to the phosphoethanolamine transferase family. EptA subfamily. Has been isolated as a 91 kDa complex containing ZipA-EptA and an unidentified 24 kDa protein.

The protein resides in the cell inner membrane. Functionally, catalyzes the addition of a phosphoethanolamine moiety to the lipid A. The phosphoethanolamine modification is required for resistance to polymyxin. This chain is Phosphoethanolamine transferase EptA (eptA), found in Escherichia coli (strain K12).